The primary structure comprises 195 residues: Inner membrane protein YohC (195 aa).

The Cytoplasmic portion of the chain corresponds to 1–32; sequence MSHVWGLFSHPDREMQVINRENETISHHYTHH. A helical membrane pass occupies residues 33–55; it reads VLLMAAIPVICAFIGTTQIGWNF. The Periplasmic portion of the chain corresponds to 56 to 64; it reads GDGTILKLS. The helical transmembrane segment at 65 to 87 threads the bilayer; the sequence is WFTGLALAVLFYGVMLAGVAVMG. Residues 88 to 107 are Cytoplasmic-facing; it reads RVIWWMARNYPQRPSLAHCM. The chain crosses the membrane as a helical span at residues 108–130; that stretch reads VFAGYVATPLFLSGLVALYPLVW. Residues 131 to 134 lie on the Periplasmic side of the membrane; the sequence is LCAL. A helical membrane pass occupies residues 135 to 157; sequence VGTVALFYTGYLLYLGIPSFLNI. Over 158-169 the chain is Cytoplasmic; it reads NKEEGLSFSSST. A helical membrane pass occupies residues 170–192; that stretch reads LAIGVLVLEVLLALTVILWGYGY. At 193-195 the chain is on the periplasmic side; that stretch reads RLF.

The protein localises to the cell inner membrane. The sequence is that of Inner membrane protein YohC (yohC) from Escherichia coli O6:H1 (strain CFT073 / ATCC 700928 / UPEC).